A 195-amino-acid chain; its full sequence is Myelin-associated neurite-outgrowth inhibitor (195 aa).

At Met-1 the chain carries N-acetylmethionine. Residues 1–18 (MNPVYSPGSSGVPYANAK) are Cytoplasmic-facing. Position 6 is a phosphoserine (Ser-6). Residues 19 to 42 (GIGYPAGFPMGYAAAAPAYSPNMY) form a helical membrane-spanning segment. Over 43–142 (PGANPTFQTG…PAPIPPPRGN (100 aa)) the chain is Extracellular. Residue Asn-46 is glycosylated (N-linked (GlcNAc...) asparagine). Residues 143 to 164 (GVTMGMVAGTTMAMSAGTLLTA) form a helical membrane-spanning segment. The Cytoplasmic segment spans residues 165–195 (HSPTPVAPHPVTVPTYRAPGTPTYSYVPPQW).

It belongs to the FAM168 family. In terms of assembly, may form homodimers. May interact with DAZAP2, FAM168A, PRDX6, RBM6, TMTC1 and YPEL2. Interacts with CDC27. In terms of processing, N-glycosylated. Expressed in the brain, within neuronal axonal fibers and associated with myelin sheets (at protein level). Expression tends to be lower in the brain of Alzheimer disease patients compared to healthy individuals (at protein level).

Its subcellular location is the cytoplasm. The protein localises to the perinuclear region. It is found in the cell membrane. It localises to the cell projection. The protein resides in the axon. In terms of biological role, inhibitor of neuronal axonal outgrowth. Acts as a negative regulator of CDC42 and STAT3 and a positive regulator of STMN2. Positive regulator of CDC27. This Homo sapiens (Human) protein is Myelin-associated neurite-outgrowth inhibitor (FAM168B).